We begin with the raw amino-acid sequence, 435 residues long: Type A flavoprotein fprA (435 aa).

The tract at residues 48–228 (ANGTTYNAYA…PFRSFVAQVL (181 aa)) is zinc metallo-hydrolase. Positions 98, 100, 102, 167, 186, and 243 each coordinate Fe cation. The region spanning 276 to 415 (LLIFYVSAYR…EGRAFGRRLA (140 aa)) is the Flavodoxin-like domain.

The protein in the N-terminal section; belongs to the zinc metallo-hydrolase group 3 family. Homodimer. The cofactor is FMN. It depends on Fe cation as a cofactor.

Low-potential electron donor to a number of redox enzymes. This is Type A flavoprotein fprA (fprA) from Rhodobacter capsulatus (Rhodopseudomonas capsulata).